Here is a 135-residue protein sequence, read N- to C-terminus: MNRFQLLSKGLRLIHKMSEEALAGVPLVHISPEGIFKYVMINVIDGGDASKAVIRGFADCTWHADIFEREEEVFKKLGLRAECPGGGRIEHNPDKKYLKVYGYSQGFGKADHAQTKRILATKYPDYTIEISDEGY.

Substrate is bound at residue lysine 37. The Proton acceptor role is filled by histidine 63. 104–106 lines the substrate pocket; it reads SQG.

Belongs to the janus family.

Its function is as follows. JanA and janB regulate somatic sex differentiation. In Drosophila simulans (Fruit fly), this protein is Sex-regulated protein janus-A (janA).